The primary structure comprises 357 residues: Phosphoribosylformylglycinamidine cyclo-ligase (357 aa).

It belongs to the AIR synthase family.

Its subcellular location is the cytoplasm. It catalyses the reaction 2-formamido-N(1)-(5-O-phospho-beta-D-ribosyl)acetamidine + ATP = 5-amino-1-(5-phospho-beta-D-ribosyl)imidazole + ADP + phosphate + H(+). It functions in the pathway purine metabolism; IMP biosynthesis via de novo pathway; 5-amino-1-(5-phospho-D-ribosyl)imidazole from N(2)-formyl-N(1)-(5-phospho-D-ribosyl)glycinamide: step 2/2. In Nitrobacter winogradskyi (strain ATCC 25391 / DSM 10237 / CIP 104748 / NCIMB 11846 / Nb-255), this protein is Phosphoribosylformylglycinamidine cyclo-ligase.